Consider the following 164-residue polypeptide: 3-dehydroquinate dehydratase (164 aa).

Catalysis depends on Tyr-22, which acts as the Proton acceptor. Positions 73, 79, and 86 each coordinate substrate. The active-site Proton donor is His-99. Substrate-binding positions include 100–101 (IS) and Arg-110.

It belongs to the type-II 3-dehydroquinase family. In terms of assembly, homododecamer.

The enzyme catalyses 3-dehydroquinate = 3-dehydroshikimate + H2O. It functions in the pathway metabolic intermediate biosynthesis; chorismate biosynthesis; chorismate from D-erythrose 4-phosphate and phosphoenolpyruvate: step 3/7. Catalyzes a trans-dehydration via an enolate intermediate. This chain is 3-dehydroquinate dehydratase, found in Aliarcobacter butzleri (strain RM4018) (Arcobacter butzleri).